Here is a 98-residue protein sequence, read N- to C-terminus: Plastocyanin (98 aa).

The 98-residue stretch at 1–98 folds into the Plastocyanin-like domain; that stretch reads DVTVKLGADS…AGMKGTITVQ (98 aa). Positions 38, 83, 86, and 91 each coordinate Cu cation.

Belongs to the plastocyanin family. The cofactor is Cu(2+).

The protein resides in the plastid. The protein localises to the chloroplast thylakoid membrane. In terms of biological role, participates in electron transfer between P700 and the cytochrome b6-f complex in photosystem I. The sequence is that of Plastocyanin (petE) from Scenedesmus fuscus (Green alga).